We begin with the raw amino-acid sequence, 115 residues long: U17-barytoxin-Tl1b (115 aa).

The first 20 residues, 1-20 (MKTIIVFLSLLVLATKFGDA), serve as a signal peptide directing secretion. A propeptide spanning residues 21–74 (KEGVNQKQKKEVTQNEFREEYLNEMAAMSLVQQLEAIERALFENEAGRNSRQKR) is cleaved from the precursor. 3 disulfide bridges follow: Cys-75–Cys-89, Cys-82–Cys-94, and Cys-88–Cys-109.

This sequence belongs to the neurotoxin 14 (magi-1) family. 03 (ICK-30-40) subfamily. As to expression, expressed by the venom gland.

It localises to the secreted. In terms of biological role, ion channel inhibitor. The polypeptide is U17-barytoxin-Tl1b (Trittame loki (Brush-footed trapdoor spider)).